We begin with the raw amino-acid sequence, 263 residues long: uncharacterized protein (263 aa).

This sequence belongs to the AtsA family.

It localises to the plastid. It is found in the chloroplast. This is an uncharacterized protein from Porphyra purpurea (Red seaweed).